A 136-amino-acid chain; its full sequence is LSADQISTVQASFDKVKGDPVGILYAVFKADPSIMAKFTQFAGKDLESIKGTAPFETHANRIVGFFSKIIGELPNIEADVNTFVASHKPRGVTHDQLNNFRAGFVSYMKAHTDFAGAEAAWGATLDTFFGMIFSKM.

The Globin domain maps to 1–136; sequence LSADQISTVQ…TFFGMIFSKM (136 aa). H87 provides a ligand contact to heme b.

The protein belongs to the globin family. Monomer.

The protein is Globin CTP-III of Chironomus thummi piger (Midge).